Consider the following 244-residue polypeptide: MLTSPQPRADGRLADVMRPLQITWDPMGFALSSLIIRTGRTSVLCSVCVEEGVPRWRKGQGKGWLSAEYRLLPGSTPQRQNRELLKLSGRTQEIQRLIGRSLRAVIDMAALGETTLRIDCDVIQADAGTRTASITGAWIALKRGCDRLLEQGLLTHQPVIEQVAAVSVGLVESYPLLDLDYSEDSRADVDLNVVMGSNGHLLELQGTAEGAPFSRNQLNDLLNLAEPGLQHLQAFQRSALMQED.

Phosphate-binding positions include arginine 90 and 128-130 (GTR).

Belongs to the RNase PH family. In terms of assembly, homohexameric ring arranged as a trimer of dimers.

It catalyses the reaction tRNA(n+1) + phosphate = tRNA(n) + a ribonucleoside 5'-diphosphate. Its function is as follows. Phosphorolytic 3'-5' exoribonuclease that plays an important role in tRNA 3'-end maturation. Removes nucleotide residues following the 3'-CCA terminus of tRNAs; can also add nucleotides to the ends of RNA molecules by using nucleoside diphosphates as substrates, but this may not be physiologically important. Probably plays a role in initiation of 16S rRNA degradation (leading to ribosome degradation) during starvation. The polypeptide is Ribonuclease PH (Prochlorococcus marinus (strain MIT 9313)).